The following is a 303-amino-acid chain: Sulfate adenylyltransferase subunit 2 (303 aa).

It belongs to the PAPS reductase family. CysD subfamily. In terms of assembly, heterodimer composed of CysD, the smaller subunit, and CysN.

It carries out the reaction sulfate + ATP + H(+) = adenosine 5'-phosphosulfate + diphosphate. The protein operates within sulfur metabolism; hydrogen sulfide biosynthesis; sulfite from sulfate: step 1/3. In terms of biological role, with CysN forms the ATP sulfurylase (ATPS) that catalyzes the adenylation of sulfate producing adenosine 5'-phosphosulfate (APS) and diphosphate, the first enzymatic step in sulfur assimilation pathway. APS synthesis involves the formation of a high-energy phosphoric-sulfuric acid anhydride bond driven by GTP hydrolysis by CysN coupled to ATP hydrolysis by CysD. The protein is Sulfate adenylyltransferase subunit 2 of Phocaeicola vulgatus (strain ATCC 8482 / DSM 1447 / JCM 5826 / CCUG 4940 / NBRC 14291 / NCTC 11154) (Bacteroides vulgatus).